The primary structure comprises 542 residues: GMP synthase [glutamine-hydrolyzing] (542 aa).

Residues 28-218 form the Glutamine amidotransferase type-1 domain; that stretch reads MIVILDFGSQ…VYHICECEPT (191 aa). Catalysis depends on Cys105, which acts as the Nucleophile. Residues His192 and Glu194 contribute to the active site. The GMPS ATP-PPase domain occupies 219–417; that stretch reads WTTEAFVDET…IGLPEEIVRR (199 aa). 246–252 is a binding site for ATP; it reads SGGVDSS.

In terms of assembly, homodimer.

It catalyses the reaction XMP + L-glutamine + ATP + H2O = GMP + L-glutamate + AMP + diphosphate + 2 H(+). It functions in the pathway purine metabolism; GMP biosynthesis; GMP from XMP (L-Gln route): step 1/1. Functionally, catalyzes the synthesis of GMP from XMP. This is GMP synthase [glutamine-hydrolyzing] from Crocosphaera subtropica (strain ATCC 51142 / BH68) (Cyanothece sp. (strain ATCC 51142)).